The chain runs to 433 residues: Adenylosuccinate synthetase (433 aa).

GTP contacts are provided by residues glycine 11–lysine 17 and glycine 39–threonine 41. Residue aspartate 12 is the Proton acceptor of the active site. Mg(2+) contacts are provided by aspartate 12 and glycine 39. Residues aspartate 12 to lysine 15, asparagine 37 to histidine 40, threonine 134, arginine 148, asparagine 230, threonine 245, and arginine 309 contribute to the IMP site. Histidine 40 (proton donor) is an active-site residue. Valine 305–arginine 311 lines the substrate pocket. GTP is bound by residues arginine 311, lysine 337–aspartate 339, and glycine 419–glycine 421.

The protein belongs to the adenylosuccinate synthetase family. As to quaternary structure, homodimer. Requires Mg(2+) as cofactor.

It localises to the cytoplasm. It carries out the reaction IMP + L-aspartate + GTP = N(6)-(1,2-dicarboxyethyl)-AMP + GDP + phosphate + 2 H(+). Its pathway is purine metabolism; AMP biosynthesis via de novo pathway; AMP from IMP: step 1/2. Its function is as follows. Plays an important role in the de novo pathway and in the salvage pathway of purine nucleotide biosynthesis. Catalyzes the first committed step in the biosynthesis of AMP from IMP. In Saccharomyces cerevisiae (strain JAY291) (Baker's yeast), this protein is Adenylosuccinate synthetase.